The sequence spans 178 residues: ATP synthase subunit delta (178 aa).

It belongs to the ATPase delta chain family. F-type ATPases have 2 components, F(1) - the catalytic core - and F(0) - the membrane proton channel. F(1) has five subunits: alpha(3), beta(3), gamma(1), delta(1), epsilon(1). F(0) has three main subunits: a(1), b(2) and c(10-14). The alpha and beta chains form an alternating ring which encloses part of the gamma chain. F(1) is attached to F(0) by a central stalk formed by the gamma and epsilon chains, while a peripheral stalk is formed by the delta and b chains.

It is found in the cell inner membrane. In terms of biological role, f(1)F(0) ATP synthase produces ATP from ADP in the presence of a proton or sodium gradient. F-type ATPases consist of two structural domains, F(1) containing the extramembraneous catalytic core and F(0) containing the membrane proton channel, linked together by a central stalk and a peripheral stalk. During catalysis, ATP synthesis in the catalytic domain of F(1) is coupled via a rotary mechanism of the central stalk subunits to proton translocation. Its function is as follows. This protein is part of the stalk that links CF(0) to CF(1). It either transmits conformational changes from CF(0) to CF(1) or is implicated in proton conduction. This is ATP synthase subunit delta from Pelodictyon phaeoclathratiforme (strain DSM 5477 / BU-1).